The chain runs to 146 residues: Small ribosomal subunit protein uS5 (146 aa).

The S5 DRBM domain occupies 8–71; that stretch reads FKEVVVNIGR…DDAFKNIIKV (64 aa).

Belongs to the universal ribosomal protein uS5 family. In terms of assembly, part of the 30S ribosomal subunit. Contacts proteins S4 and S8.

With S4 and S12 plays an important role in translational accuracy. Its function is as follows. Located at the back of the 30S subunit body where it stabilizes the conformation of the head with respect to the body. This Wolinella succinogenes (strain ATCC 29543 / DSM 1740 / CCUG 13145 / JCM 31913 / LMG 7466 / NCTC 11488 / FDC 602W) (Vibrio succinogenes) protein is Small ribosomal subunit protein uS5.